The sequence spans 131 residues: Small ribosomal subunit protein uS8 (131 aa).

Belongs to the universal ribosomal protein uS8 family. As to quaternary structure, part of the 30S ribosomal subunit. Contacts proteins S5 and S12.

One of the primary rRNA binding proteins, it binds directly to 16S rRNA central domain where it helps coordinate assembly of the platform of the 30S subunit. The chain is Small ribosomal subunit protein uS8 from Thermodesulfovibrio yellowstonii (strain ATCC 51303 / DSM 11347 / YP87).